The sequence spans 280 residues: Large ribosomal subunit protein uL2 (280 aa).

Disordered stretches follow at residues 1–47 (MAIR…NVHG) and 224–280 (VVMN…SKKR). A compositionally biased stretch (basic and acidic residues) spans 23–33 (EITRSTPEKSL). The segment covering 37 to 47 (LPKKGGRNVHG) has biased composition (basic residues). Over residues 258 to 268 (RNPNRYSNNMI) the composition is skewed to polar residues. A compositionally biased stretch (basic residues) spans 270–280 (QRRRTNKSKKR).

The protein belongs to the universal ribosomal protein uL2 family. Part of the 50S ribosomal subunit. Forms a bridge to the 30S subunit in the 70S ribosome.

In terms of biological role, one of the primary rRNA binding proteins. Required for association of the 30S and 50S subunits to form the 70S ribosome, for tRNA binding and peptide bond formation. It has been suggested to have peptidyltransferase activity; this is somewhat controversial. Makes several contacts with the 16S rRNA in the 70S ribosome. In Corynebacterium diphtheriae (strain ATCC 700971 / NCTC 13129 / Biotype gravis), this protein is Large ribosomal subunit protein uL2.